We begin with the raw amino-acid sequence, 277 residues long: Adenylate kinase (277 aa).

72–77 lines the ATP pocket; sequence GAGKGT. Residues 92–121 form an NMP region; that stretch reads ATGDMLRSQVAKQTALGVQAKKIMDQGGLV. AMP contacts are provided by residues Thr-93, Arg-98, 119–121, 148–151, and Gln-155; these read GLV and GFPR. The tract at residues 189–226 is LID; sequence GRLVHPASGRSYHKLFNPPKVAMTDDVTGDPLVQRSDD. Residues Arg-190 and 199 to 200 contribute to the ATP site; that span reads SY. AMP-binding residues include Arg-223 and Arg-234. Gln-262 lines the ATP pocket.

Belongs to the adenylate kinase family. AK2 subfamily. Monomer.

It is found in the cytoplasm. The protein resides in the cytosol. It localises to the mitochondrion intermembrane space. It carries out the reaction AMP + ATP = 2 ADP. Functionally, catalyzes the reversible transfer of the terminal phosphate group between ATP and AMP. Plays an important role in cellular energy homeostasis and in adenine nucleotide metabolism. Adenylate kinase activity is critical for regulation of the phosphate utilization and the AMP de novo biosynthesis pathways. In Eremothecium gossypii (strain ATCC 10895 / CBS 109.51 / FGSC 9923 / NRRL Y-1056) (Yeast), this protein is Adenylate kinase.